Consider the following 196-residue polypeptide: Elongation factor Ts (196 aa).

The involved in Mg(2+) ion dislocation from EF-Tu stretch occupies residues 80 to 83 (TDFV).

This sequence belongs to the EF-Ts family.

It is found in the cytoplasm. In terms of biological role, associates with the EF-Tu.GDP complex and induces the exchange of GDP to GTP. It remains bound to the aminoacyl-tRNA.EF-Tu.GTP complex up to the GTP hydrolysis stage on the ribosome. This is Elongation factor Ts from Desulfotalea psychrophila (strain LSv54 / DSM 12343).